Consider the following 154-residue polypeptide: Interleukin-2 (154 aa).

A signal peptide spans 1 to 20 (MYRMQLLSCIALSLALVTNS). The O-linked (GalNAc...) threonine glycan is linked to threonine 23. Cysteine 78 and cysteine 126 are oxidised to a cystine.

The protein belongs to the IL-2 family.

It is found in the secreted. Cytokine produced by activated CD4-positive helper T-cells and to a lesser extend activated CD8-positive T-cells and natural killer (NK) cells that plays pivotal roles in the immune response and tolerance. Binds to a receptor complex composed of either the high-affinity trimeric IL-2R (IL2RA/CD25, IL2RB/CD122 and IL2RG/CD132) or the low-affinity dimeric IL-2R (IL2RB and IL2RG). Interaction with the receptor leads to oligomerization and conformation changes in the IL-2R subunits resulting in downstream signaling starting with phosphorylation of JAK1 and JAK3. In turn, JAK1 and JAK3 phosphorylate the receptor to form a docking site leading to the phosphorylation of several substrates including STAT5. This process leads to activation of several pathways including STAT, phosphoinositide-3-kinase/PI3K and mitogen-activated protein kinase/MAPK pathways. Functions as a T-cell growth factor and can increase NK-cell cytolytic activity as well. Promotes strong proliferation of activated B-cells and subsequently immunoglobulin production. Plays a pivotal role in regulating the adaptive immune system by controlling the survival and proliferation of regulatory T-cells, which are required for the maintenance of immune tolerance. Moreover, participates in the differentiation and homeostasis of effector T-cell subsets, including Th1, Th2, Th17 as well as memory CD8-positive T-cells. This is Interleukin-2 (IL2) from Cercocebus atys (Sooty mangabey).